Consider the following 185-residue polypeptide: Sarcoplasmic calcium-binding proteins II, V, VI, and VII (185 aa).

EF-hand domains are found at residues 5–41 (FQKQKIKFTFDFFLDMNHDGSIQDNDFEDMMTRYKEV), 57–92 (SLEDEWRDLKGRADINKDDVVSWEEYLAMWEKTIAT), 102–137 (WCQNRIPFLFKGMDVSGDGIVDLEEFQNYCKNFQLQ), and 138–173 (CADVPAVYNVITDGGKVTFDLNRYKELYYRLLTSPA). Residues Asp-19, Asn-21, Asp-23, Ser-25, Asp-30, Asp-70, Asn-72, Asp-74, Glu-81, Asp-115, Ser-117, Asp-119, and Glu-126 each coordinate Ca(2+).

Functionally, like parvalbumins, SCPs seem to be more abundant in fast contracting muscles, but no functional relationship can be established from this distribution. The polypeptide is Sarcoplasmic calcium-binding proteins II, V, VI, and VII (Branchiostoma lanceolatum (Common lancelet)).